We begin with the raw amino-acid sequence, 91 residues long: Small ribosomal subunit protein bS16c (91 aa).

Belongs to the bacterial ribosomal protein bS16 family.

The protein resides in the plastid. It localises to the chloroplast. The protein is Small ribosomal subunit protein bS16c of Pelargonium hortorum (Common geranium).